Consider the following 467-residue polypeptide: Cysteine--tRNA ligase (467 aa).

Residue C28 participates in Zn(2+) binding. Positions 30-40 (PTVYNYIHVGN) match the 'HIGH' region motif. Zn(2+) is bound by residues C212, H237, and E241. Residues 269-273 (KMSKS) carry the 'KMSKS' region motif. An ATP-binding site is contributed by K272.

It belongs to the class-I aminoacyl-tRNA synthetase family. Monomer. Zn(2+) serves as cofactor.

The protein resides in the cytoplasm. It carries out the reaction tRNA(Cys) + L-cysteine + ATP = L-cysteinyl-tRNA(Cys) + AMP + diphosphate. The chain is Cysteine--tRNA ligase from Oenococcus oeni (strain ATCC BAA-331 / PSU-1).